A 155-amino-acid polypeptide reads, in one-letter code: Desiccation-related protein clone PCC6-19 (155 aa).

Residues 1–155 are disordered; the sequence is MAQFGGEKYG…IKEKLPGGQH (155 aa). Gly residues-rich tracts occupy residues 27-39 and 47-76; these read AHRG…GGQQ and GVLG…GALG. The segment covering 83 to 92 has biased composition (low complexity); the sequence is GSSSSSSSSE. Residues 118–135 are compositionally biased toward polar residues; the sequence is TTTDQQQYGTAATHGQAQ. Positions 136–155 are enriched in basic and acidic residues; sequence QHEKKGIMDKIKEKLPGGQH.

It belongs to the plant dehydrin family.

This is Desiccation-related protein clone PCC6-19 from Craterostigma plantagineum (Blue gem).